Reading from the N-terminus, the 1297-residue chain is Phosphoribosylformylglycinamidine synthase (1297 aa).

ATP contacts are provided by residues 307-318 and Ala-678; that span reads GASTGSGGEIRD. The Mg(2+) site is built by Glu-718, Asn-722, and Asp-886. Residues 1044 to 1297 enclose the Glutamine amidotransferase type-1 domain; it reads MAILREQGVN…MFQNARKNLA (254 aa). The active-site Nucleophile is Cys-1137. Active-site residues include His-1262 and Glu-1264.

It in the N-terminal section; belongs to the FGAMS family. Monomer.

It is found in the cytoplasm. The enzyme catalyses N(2)-formyl-N(1)-(5-phospho-beta-D-ribosyl)glycinamide + L-glutamine + ATP + H2O = 2-formamido-N(1)-(5-O-phospho-beta-D-ribosyl)acetamidine + L-glutamate + ADP + phosphate + H(+). It functions in the pathway purine metabolism; IMP biosynthesis via de novo pathway; 5-amino-1-(5-phospho-D-ribosyl)imidazole from N(2)-formyl-N(1)-(5-phospho-D-ribosyl)glycinamide: step 1/2. Functionally, phosphoribosylformylglycinamidine synthase involved in the purines biosynthetic pathway. Catalyzes the ATP-dependent conversion of formylglycinamide ribonucleotide (FGAR) and glutamine to yield formylglycinamidine ribonucleotide (FGAM) and glutamate. The sequence is that of Phosphoribosylformylglycinamidine synthase from Vibrio vulnificus (strain YJ016).